The chain runs to 356 residues: Alanine racemase, catabolic (356 aa).

The active-site Proton acceptor; specific for D-alanine is K35. An N6-(pyridoxal phosphate)lysine modification is found at K35. A substrate-binding site is contributed by R130. The active-site Proton acceptor; specific for L-alanine is Y253. Residue M301 coordinates substrate.

It belongs to the alanine racemase family. Requires pyridoxal 5'-phosphate as cofactor.

It carries out the reaction L-alanine = D-alanine. Its function is as follows. Isomerizes L-alanine to D-alanine which is then oxidized to pyruvate by DadA. This is Alanine racemase, catabolic (dadX) from Escherichia coli (strain K12).